The following is a 194-amino-acid chain: Calcium channel flower (194 aa).

Helical transmembrane passes span 35-55 (LGIVAAFFAILFGLWNVFSII), 66-88 (IIQMVAGFVVMLLEAPCCFVCFE), and 113-133 (AIPPIILCFGLASLFGSGLIF).

Belongs to the calcium channel flower family. As to quaternary structure, homomultimer. Associates with the dally/ magu complex.

It localises to the cytoplasmic vesicle. It is found in the secretory vesicle. Its subcellular location is the synaptic vesicle membrane. The protein resides in the presynaptic cell membrane. The protein localises to the endosome. Its activity is regulated as follows. Channel activity is inhibited by La(3+), which reduces Ca(2+) influx and thus inhibits it's function in promoting activity-dependent bulk endocytosis (ADBE) in response to high stimuli. Its function is as follows. Transmembrane protein which mediates synaptic endocytosis, fitness-based cell culling, neuronal culling, morphogen gradient scaling, and calcium transport. Regulates synaptic endocytosis and hence couples exo- with endocytosis. Controls two major modes of synaptic vesicle (SV) endocytosis in the synaptic boutons of neuromuscular junctions (NMJs); Ca(2+) channel-independent Clathrin-mediated endocytosis (CME) in response to mild stimulation, and Ca(2+) channel-dependent activity-dependent bulk endocytosis (ADBE) in response to strong stimulation. Functions in ADBE and subsequent SV reformation from bulk endosomes by initiating Ca(2+) channel-dependent phosphatidylinositol 4,5-bisphosphate (PtdIns(4,5)P2) compartmentalization in synaptic boutons. There it acts at the periactive zone to provide the low Ca(2+) levels required to initiate Calcineurin activation and upregulate PtdIns(4,5)P2. Conversely PtdIns(4,5)P2 enhances fwe Ca(2+) channel-activity, establishing a positive feedback loop that induces PtdIns(4,5)P2 microdomain at the periactive zone. These microdomains trigger bulk membrane invagination (i.e. ADBE) by triggering actin polymerization while also promoting localization of fwe to bulk endosomes, thereby removing the ADBE trigger to reduce endocytosis and prevent excess membrane uptake. PtdIns(4,5)P2 then promotes SV reformation from the bulk endosomes, to coordinate ADBE and subsequent SV reformation. Different combinations of the flower isoforms at the cell membrane are also required for the identification and elimination of suboptimal or supernumerary cells during development, regeneration, and adulthood. Required for the recognition and elimination of unfit cells in the developing wing during cell competition. In the developing pupal retina, mediates the elimination of unwanted postmitotic neurons, including supernumerary photoreceptor neurons that form at the periphery of the retina and are contained within incomplete ommatidia units. Also required for efficient elimination and replacement of old neurons by newly generated neurons during regeneration in the adult brain following mechanical injury. Downstream of the flower fitness fingerprints, cells identified as unwanted or unfit are eliminated via apoptosis through the expression of ahuizotl (azot). However, the cells marked for elimination by the flower isoforms only undergo apoptosis if additional thresholds are met; (1) their neighboring fit/healthy cells express different levels of the fwe isoforms, and (2) the levels of the protective signal SPARC expressed by the loser or unwanted cells are unable to inhibit caspase activation. These additional thresholds for flower-mediated apoptosis, allows useful cells to recover from transient and limited stress before they are unnecessarily eliminated. Functions with dally and magu in a mechanism of scaling, which utilises apoptosis to ensure that the dpp morphogen gradient, which mediates organ growth, remains proportional to the size of the growing wing. In this mechanism, fwe represses dally- and Magu-dependent activity in expanding the gradient, and dally/Magu inhibits fwe-dependent apoptosis to keep cell death rate low. When the levels of these different proteins are optimally regulated the gradient correctly scales with organ growth but when this fails, fwe-mediated apoptosis is activated to trim the developing tissue to match the correct size of the gradient. In Drosophila yakuba (Fruit fly), this protein is Calcium channel flower.